Reading from the N-terminus, the 359-residue chain is UDP-N-acetylglucosamine--N-acetylmuramyl-(pentapeptide) pyrophosphoryl-undecaprenol N-acetylglucosamine transferase (359 aa).

UDP-N-acetyl-alpha-D-glucosamine contacts are provided by residues 15–17 (SGG), Asn-127, Arg-164, Ser-192, Ile-246, 265–270 (ALTVSE), and Gln-290.

This sequence belongs to the glycosyltransferase 28 family. MurG subfamily.

Its subcellular location is the cell membrane. The catalysed reaction is di-trans,octa-cis-undecaprenyl diphospho-N-acetyl-alpha-D-muramoyl-L-alanyl-D-glutamyl-meso-2,6-diaminopimeloyl-D-alanyl-D-alanine + UDP-N-acetyl-alpha-D-glucosamine = di-trans,octa-cis-undecaprenyl diphospho-[N-acetyl-alpha-D-glucosaminyl-(1-&gt;4)]-N-acetyl-alpha-D-muramoyl-L-alanyl-D-glutamyl-meso-2,6-diaminopimeloyl-D-alanyl-D-alanine + UDP + H(+). It participates in cell wall biogenesis; peptidoglycan biosynthesis. Cell wall formation. Catalyzes the transfer of a GlcNAc subunit on undecaprenyl-pyrophosphoryl-MurNAc-pentapeptide (lipid intermediate I) to form undecaprenyl-pyrophosphoryl-MurNAc-(pentapeptide)GlcNAc (lipid intermediate II). The sequence is that of UDP-N-acetylglucosamine--N-acetylmuramyl-(pentapeptide) pyrophosphoryl-undecaprenol N-acetylglucosamine transferase from Wigglesworthia glossinidia brevipalpis.